The following is a 125-amino-acid chain: MAERPSASRQKAYRRGHRGEWLAAAALMLKGYRILARRHRTRFGEIDLIARRGDLVVFVEVKARRSLMEAMEAIGHESERRIEAAADIWLSRQADYGRLSMRFDMVAVLPWRWPVHVENAFYGRN.

The protein belongs to the UPF0102 family.

The sequence is that of UPF0102 protein mlr4633 from Mesorhizobium japonicum (strain LMG 29417 / CECT 9101 / MAFF 303099) (Mesorhizobium loti (strain MAFF 303099)).